The chain runs to 420 residues: Glycerol-3-phosphate dehydrogenase [NAD(+)] (420 aa).

Residues 16-21 (GSGNWG), F48, and F119 contribute to the NAD(+) site. A substrate-binding site is contributed by K142. A175 contributes to the NAD(+) binding site. The segment at 190–217 (YDPPPMDNSRAPTPRSNSPANGNGIAPL) is disordered. Positions 199-210 (RAPTPRSNSPAN) are enriched in polar residues. K278 acts as the Proton acceptor in catalysis. Positions 344 and 373 each coordinate NAD(+). 344 to 345 (RN) is a substrate binding site.

It belongs to the NAD-dependent glycerol-3-phosphate dehydrogenase family.

It catalyses the reaction sn-glycerol 3-phosphate + NAD(+) = dihydroxyacetone phosphate + NADH + H(+). In Colletotrichum gloeosporioides (Anthracnose fungus), this protein is Glycerol-3-phosphate dehydrogenase [NAD(+)].